Reading from the N-terminus, the 261-residue chain is uncharacterized protein (261 aa).

A signal peptide spans 1–22; that stretch reads MRYLKKVTIYISLLILTIFIGG. C23 is lipidated: N-palmitoyl cysteine. C23 carries S-diacylglycerol cysteine lipidation.

This sequence belongs to the staphylococcal tandem lipoprotein family.

The protein localises to the cell membrane. This is an uncharacterized protein from Staphylococcus epidermidis (strain ATCC 35984 / DSM 28319 / BCRC 17069 / CCUG 31568 / BM 3577 / RP62A).